Reading from the N-terminus, the 267-residue chain is MKVGIDAGGTLIKIIQEQDNQRTFKTELTKNIDQVVEWLNQQQIEKLCLTGGNAGVIAENINIPAQIFVEFDAASQGLGILLKEQGHDLADYIFANVGTGTSLHYFDGQSQRRVGGIGTGGGMIQGLGYLLSQITDYKQLTDMAQHGDRNTIDLKVRHIYKDTEPPIPGDLTAANFGHVLHHLDADFTPSNKLAAVIGVVGEVVTTMAITVAREFKTENIVYIGSSFHNNALLRKVVEDYTVLRGCKPYYVENGAFSGAIGALYLEK.

Residue 6 to 13 participates in ATP binding; the sequence is DAGGTLIK. E70 acts as the Proton acceptor in catalysis. ATP is bound by residues T99, 121 to 125, Y137, and S225; that span reads GGMIQ.

The protein belongs to the type II pantothenate kinase family. In terms of assembly, homodimer.

The protein resides in the cytoplasm. The catalysed reaction is (R)-pantothenate + ATP = (R)-4'-phosphopantothenate + ADP + H(+). Its pathway is cofactor biosynthesis; coenzyme A biosynthesis; CoA from (R)-pantothenate: step 1/5. Its function is as follows. Catalyzes the phosphorylation of pantothenate (Pan), the first step in CoA biosynthesis. This chain is Type II pantothenate kinase, found in Staphylococcus aureus (strain bovine RF122 / ET3-1).